The chain runs to 959 residues: Isoleucine--tRNA ligase (959 aa).

The short motif at 66-76 (PYANGDLHIGH) is the 'HIGH' region element. Glu-592 provides a ligand contact to L-isoleucyl-5'-AMP. Positions 633–637 (KMSKS) match the 'KMSKS' region motif. Lys-636 is a binding site for ATP. Positions 922, 925, 942, and 945 each coordinate Zn(2+).

The protein belongs to the class-I aminoacyl-tRNA synthetase family. IleS type 1 subfamily. In terms of assembly, monomer. Requires Zn(2+) as cofactor.

It localises to the cytoplasm. It catalyses the reaction tRNA(Ile) + L-isoleucine + ATP = L-isoleucyl-tRNA(Ile) + AMP + diphosphate. In terms of biological role, catalyzes the attachment of isoleucine to tRNA(Ile). As IleRS can inadvertently accommodate and process structurally similar amino acids such as valine, to avoid such errors it has two additional distinct tRNA(Ile)-dependent editing activities. One activity is designated as 'pretransfer' editing and involves the hydrolysis of activated Val-AMP. The other activity is designated 'posttransfer' editing and involves deacylation of mischarged Val-tRNA(Ile). The chain is Isoleucine--tRNA ligase from Ralstonia pickettii (strain 12J).